We begin with the raw amino-acid sequence, 244 residues long: MTDTHVPPPELPAAEEGEERPHRRIKSFVMRAGRMTEGQQRGLDQGRPLFGLSLTDTPVDFDQVFGRSAPRTLEIGFGMGHSLLEMAAASPEQDFIGVEVHYPGVGAMLNGVLTQGLTNVRVYDCDAIEVLNRCIADNSLDRLMLFFPDPWHKSRHHKRRIVQPEFAALVRSKLKVGGVFHMATDWGPYAEYMLEVMSVAPGYRNQAEDNQYVPRPAERPITKFERRGEKLGHGVWDLKFEKVD.

The segment covering 1 to 11 (MTDTHVPPPEL) has biased composition (pro residues). Residues 1–23 (MTDTHVPPPELPAAEEGEERPHR) are disordered. The S-adenosyl-L-methionine site is built by Glu-74, Glu-99, Asp-126, and Asp-149. Asp-149 is a catalytic residue. Substrate-binding positions include Lys-153, Asp-185, and 222–225 (TKFE).

It belongs to the class I-like SAM-binding methyltransferase superfamily. TrmB family.

The enzyme catalyses guanosine(46) in tRNA + S-adenosyl-L-methionine = N(7)-methylguanosine(46) in tRNA + S-adenosyl-L-homocysteine. It participates in tRNA modification; N(7)-methylguanine-tRNA biosynthesis. Functionally, catalyzes the formation of N(7)-methylguanine at position 46 (m7G46) in tRNA. This chain is tRNA (guanine-N(7)-)-methyltransferase, found in Pseudomonas syringae pv. tomato (strain ATCC BAA-871 / DC3000).